A 305-amino-acid polypeptide reads, in one-letter code: Ribosomal RNA small subunit methyltransferase H (305 aa).

S-adenosyl-L-methionine-binding positions include 30-32 (GGH), Asp49, Phe74, Asp96, and Gln103.

It belongs to the methyltransferase superfamily. RsmH family.

Its subcellular location is the cytoplasm. The catalysed reaction is cytidine(1402) in 16S rRNA + S-adenosyl-L-methionine = N(4)-methylcytidine(1402) in 16S rRNA + S-adenosyl-L-homocysteine + H(+). In terms of biological role, specifically methylates the N4 position of cytidine in position 1402 (C1402) of 16S rRNA. This chain is Ribosomal RNA small subunit methyltransferase H, found in Francisella tularensis subsp. mediasiatica (strain FSC147).